A 404-amino-acid polypeptide reads, in one-letter code: Argininosuccinate synthase (404 aa).

ATP-binding positions include 10–18 (AYSGGLDTS) and Ala-37. The L-citrulline site is built by Tyr-88 and Ser-93. Gly-118 lines the ATP pocket. Residues Thr-120, Asn-124, and Asp-125 each contribute to the L-aspartate site. L-citrulline is bound at residue Asn-124. L-citrulline is bound by residues Arg-128, Ser-178, Ser-187, Glu-263, and Tyr-275.

It belongs to the argininosuccinate synthase family. Type 1 subfamily. In terms of assembly, homotetramer.

Its subcellular location is the cytoplasm. The catalysed reaction is L-citrulline + L-aspartate + ATP = 2-(N(omega)-L-arginino)succinate + AMP + diphosphate + H(+). Its pathway is amino-acid biosynthesis; L-arginine biosynthesis; L-arginine from L-ornithine and carbamoyl phosphate: step 2/3. This is Argininosuccinate synthase from Hahella chejuensis (strain KCTC 2396).